Consider the following 448-residue polypeptide: Alginate biosynthesis transcriptional regulatory protein AlgB (448 aa).

One can recognise a Response regulatory domain in the interval 10-124 (RILLVDDESA…QLRLATAKQL (115 aa)). Residue Asp59 is modified to 4-aspartylphosphate. In terms of domain architecture, Sigma-54 factor interaction spans 147-376 (LDSHSPAMMA…LRNVVERASI (230 aa)). ATP is bound by residues 175–182 (GESGTGKG) and 238–247 (ADGGTLFLDE). A DNA-binding region (H-T-H motif) is located at residues 425–444 (LDQAAKTLGIDASTLYRKRK).

The protein operates within glycan biosynthesis; alginate biosynthesis [regulation]. Positive regulator of the alginate biosynthetic gene algD. In Pseudomonas putida (strain ATCC 47054 / DSM 6125 / CFBP 8728 / NCIMB 11950 / KT2440), this protein is Alginate biosynthesis transcriptional regulatory protein AlgB (algB).